Consider the following 510-residue polypeptide: ATP synthase subunit alpha (510 aa).

169 to 176 (GDRQTGKT) contacts ATP.

The protein belongs to the ATPase alpha/beta chains family. As to quaternary structure, F-type ATPases have 2 components, CF(1) - the catalytic core - and CF(0) - the membrane proton channel. CF(1) has five subunits: alpha(3), beta(3), gamma(1), delta(1), epsilon(1). CF(0) has three main subunits: a(1), b(2) and c(9-12). The alpha and beta chains form an alternating ring which encloses part of the gamma chain. CF(1) is attached to CF(0) by a central stalk formed by the gamma and epsilon chains, while a peripheral stalk is formed by the delta and b chains.

The protein resides in the cell inner membrane. It catalyses the reaction ATP + H2O + 4 H(+)(in) = ADP + phosphate + 5 H(+)(out). Produces ATP from ADP in the presence of a proton gradient across the membrane. The alpha chain is a regulatory subunit. The sequence is that of ATP synthase subunit alpha from Azorhizobium caulinodans (strain ATCC 43989 / DSM 5975 / JCM 20966 / LMG 6465 / NBRC 14845 / NCIMB 13405 / ORS 571).